Reading from the N-terminus, the 218-residue chain is Uracil-DNA glycosylase (218 aa).

Residue Asp-68 is the Proton acceptor of the active site.

It belongs to the uracil-DNA glycosylase (UDG) superfamily. UNG family. Homodimer. Interacts with protein OPG148. Component of the Uracil-DNA glycosylase(UDG)-OPG148-polymerase complex; OPG148 and UDG form a heterodimeric processivity factor that associates with OPG71 to form the processive polymerase holoenzyme.

It carries out the reaction Hydrolyzes single-stranded DNA or mismatched double-stranded DNA and polynucleotides, releasing free uracil.. In terms of biological role, plays an essential role in viral replication as a component of the DNA polymerase processivity factor. Excises uracil residues from the DNA which can arise as a result of misincorporation of dUMP residues by DNA polymerase or due to deamination of cytosine. The polypeptide is Uracil-DNA glycosylase (OPG116) (Bos taurus (Bovine)).